Here is a 669-residue protein sequence, read N- to C-terminus: L-type lectin-domain containing receptor kinase V.9 (669 aa).

The N-terminal stretch at 1–21 is a signal peptide; that stretch reads MKFFVLVLLLVLQFFSNKALS. Residues 22-286 lie on the Extracellular side of the membrane; that stretch reads QSEEGEFGFN…RDSRSTSVKK (265 aa). The segment at 38-259 is legume-lectin like; sequence SGIAITNSKG…SHYILGWTFK (222 aa). N-linked (GlcNAc...) asparagine glycosylation is found at asparagine 53, asparagine 75, asparagine 124, asparagine 206, and asparagine 261. The helical transmembrane segment at 287 to 307 threads the bilayer; sequence ILAISLSLTSLAILVFLTISY. Residues 308-669 are Cytoplasmic-facing; that stretch reads MLFLKRKKLM…FTEPFVSHGR (362 aa). The region spanning 344-603 is the Protein kinase domain; that stretch reads FRNSELLGKG…LGLFCSHPVA (260 aa). ATP contacts are provided by residues 350-358 and lysine 373; that span reads LGKGGFGKV. The Proton acceptor role is filled by aspartate 469.

This sequence in the C-terminal section; belongs to the protein kinase superfamily. Ser/Thr protein kinase family. In the N-terminal section; belongs to the leguminous lectin family.

It is found in the cell membrane. The enzyme catalyses L-seryl-[protein] + ATP = O-phospho-L-seryl-[protein] + ADP + H(+). The catalysed reaction is L-threonyl-[protein] + ATP = O-phospho-L-threonyl-[protein] + ADP + H(+). This is L-type lectin-domain containing receptor kinase V.9 (LECRK59) from Arabidopsis thaliana (Mouse-ear cress).